Reading from the N-terminus, the 141-residue chain is Vesicle-associated membrane protein 4 (141 aa).

Residues 1 to 51 (MPPKFKRHLNDDDVTGSVKSERRNLLEDDSDEEEDFFLRGPSGPRFGPRND) form a disordered region. Topologically, residues 1–115 (MPPKFKRHLN…RRQMWWRGCK (115 aa)) are cytoplasmic. S17 and S30 each carry phosphoserine. In terms of domain architecture, v-SNARE coiled-coil homology spans 52–112 (KIKHVQNQVD…KQLRRQMWWR (61 aa)). The helical; Anchor for type IV membrane protein transmembrane segment at 116 to 136 (IKAIMALVAVILLLVIIILIV) threads the bilayer. Topologically, residues 137–141 (VKYRT) are vesicular.

Belongs to the synaptobrevin family. In terms of assembly, identified in a complex containing STX6, STX12, VAMP4 and VTI1A. Interacts with BAIAP3; this interaction is increased in the presence of calcium.

The protein resides in the golgi apparatus. The protein localises to the trans-Golgi network membrane. Involved in the pathway that functions to remove an inhibitor (probably synaptotagmin-4) of calcium-triggered exocytosis during the maturation of secretory granules. May be a marker for this sorting pathway that is critical for remodeling the secretory response of granule. This Bos taurus (Bovine) protein is Vesicle-associated membrane protein 4 (VAMP4).